The following is a 609-amino-acid chain: PTS system beta-glucoside-specific EIIBCA component (609 aa).

A PTS EIIB type-1 domain is found at 1 to 86; sequence MDYDKLSKDI…VRHSNLSDEK (86 aa). Residue Cys26 is the Phosphocysteine intermediate; for EIIB activity of the active site. The PTS EIIC type-1 domain occupies 103-459; it reads DVISGVFTPI…GSQQPAVHEG (357 aa). 10 helical membrane-spanning segments follow: residues 112–132, 141–161, 174–194, 202–222, 246–266, 281–301, 321–341, 351–371, 379–399, and 412–432; these read ILPA…AVTF, VHVI…LLLA, VAAA…LGAG, LPVT…SIWI, FTLL…GAIL, AGLV…MTGM, LLPA…AVFL, LALT…MYGV, FAAA…TGVA, and IPVF…IAFA. Residues 480–584 enclose the PTS EIIA type-1 domain; that stretch reads DGVFSAGVMG…DVITPVIVTN (105 aa). The active-site Tele-phosphohistidine intermediate; for EIIA activity is His532.

The protein resides in the cell membrane. The phosphoenolpyruvate-dependent sugar phosphotransferase system (sugar PTS), a major carbohydrate active -transport system, catalyzes the phosphorylation of incoming sugar substrates concomitantly with their translocation across the cell membrane. This system is involved in beta-glucoside transport. The polypeptide is PTS system beta-glucoside-specific EIIBCA component (bglP) (Bacillus subtilis (strain 168)).